The sequence spans 373 residues: Dual-specificity RNA methyltransferase RlmN (373 aa).

Glu-94 (proton acceptor) is an active-site residue. The Radical SAM core domain maps to 100-339; it reads EDDRATLCVS…VIVRKTRGDD (240 aa). A disulfide bond links Cys-107 and Cys-344. [4Fe-4S] cluster-binding residues include Cys-114, Cys-118, and Cys-121. S-adenosyl-L-methionine is bound by residues 168–169, Ser-200, 222–224, and Asn-301; these read GE and SIH. The active-site S-methylcysteine intermediate is the Cys-344.

It belongs to the radical SAM superfamily. RlmN family. [4Fe-4S] cluster serves as cofactor.

The protein resides in the cytoplasm. The catalysed reaction is adenosine(2503) in 23S rRNA + 2 reduced [2Fe-2S]-[ferredoxin] + 2 S-adenosyl-L-methionine = 2-methyladenosine(2503) in 23S rRNA + 5'-deoxyadenosine + L-methionine + 2 oxidized [2Fe-2S]-[ferredoxin] + S-adenosyl-L-homocysteine. It catalyses the reaction adenosine(37) in tRNA + 2 reduced [2Fe-2S]-[ferredoxin] + 2 S-adenosyl-L-methionine = 2-methyladenosine(37) in tRNA + 5'-deoxyadenosine + L-methionine + 2 oxidized [2Fe-2S]-[ferredoxin] + S-adenosyl-L-homocysteine. In terms of biological role, specifically methylates position 2 of adenine 2503 in 23S rRNA and position 2 of adenine 37 in tRNAs. m2A2503 modification seems to play a crucial role in the proofreading step occurring at the peptidyl transferase center and thus would serve to optimize ribosomal fidelity. This chain is Dual-specificity RNA methyltransferase RlmN, found in Shewanella putrefaciens (strain CN-32 / ATCC BAA-453).